A 184-amino-acid chain; its full sequence is Protein GrpE (184 aa).

Positions 1-35 are disordered; that stretch reads MTQENQNPPPEQEDVAADPQVNEAAASEPAAVKTP.

Belongs to the GrpE family. As to quaternary structure, homodimer.

The protein localises to the cytoplasm. Functionally, participates actively in the response to hyperosmotic and heat shock by preventing the aggregation of stress-denatured proteins, in association with DnaK and GrpE. It is the nucleotide exchange factor for DnaK and may function as a thermosensor. Unfolded proteins bind initially to DnaJ; upon interaction with the DnaJ-bound protein, DnaK hydrolyzes its bound ATP, resulting in the formation of a stable complex. GrpE releases ADP from DnaK; ATP binding to DnaK triggers the release of the substrate protein, thus completing the reaction cycle. Several rounds of ATP-dependent interactions between DnaJ, DnaK and GrpE are required for fully efficient folding. In Polynucleobacter asymbioticus (strain DSM 18221 / CIP 109841 / QLW-P1DMWA-1) (Polynucleobacter necessarius subsp. asymbioticus), this protein is Protein GrpE.